The sequence spans 308 residues: HTH-type transcriptional activator AllS (308 aa).

The region spanning 2-59 (FDPETLRTFISVAETGSFSKAAERLCKTTATISYRIKLLEENTGVGLFFRTTRSVSLT) is the HTH lysR-type domain. A DNA-binding region (H-T-H motif) is located at residues 19 to 38 (FSKAAERLCKTTATISYRIK).

The protein belongs to the LysR transcriptional regulatory family.

Functionally, positive regulator essential for the expression of allD operon. Binds to the allD promoter. In Salmonella paratyphi A (strain ATCC 9150 / SARB42), this protein is HTH-type transcriptional activator AllS (allS).